A 239-amino-acid chain; its full sequence is MSEPLIFYPQGCCRAIFIRRYKRFTVEAMLDGEVVGVHTNNTGSMLGLLREGQEIYISPAQNPNRKLKWTLEAVMPFGEMIGVNTSVPNKMLQLAFEAGQLPEAGGYTAIKREAKVGNSRLDGLFTDDSGKLPKLWVECKNVTLVEDDIACFPDAQTERGRKHLVELMDLAAKGDRVALFFFVQRTDGSCFGPADFIDPEYAELFYKALDAGVKCWAYEAVLSERGIGIGRKLPLAACR.

The protein belongs to the SfsA family.

This chain is Sugar fermentation stimulation protein homolog, found in Maridesulfovibrio salexigens (strain ATCC 14822 / DSM 2638 / NCIMB 8403 / VKM B-1763) (Desulfovibrio salexigens).